A 135-amino-acid polypeptide reads, in one-letter code: Snaclec rhodocetin subunit gamma (135 aa).

3 disulfide bridges follow: Cys-4–Cys-15, Cys-32–Cys-129, and Cys-104–Cys-121. Residues 11–130 (YDQHCYQAFN…CQAKNPFVCK (120 aa)) enclose the C-type lectin domain.

Belongs to the snaclec family. Heterotetramer of subunit alpha, beta, gamma and delta; only the gamma and the delta subunits are disulfide-linked. Alpha-beta heterodimer and gamma-delta heterodimer associate orthogonally, giving a cruciform conformation. This heterotetramer may covalently dimerizes thanks to the gamma subunit. As to expression, expressed by the venom gland.

It is found in the secreted. Potent inhibitor of collagen-induced platelet aggregation. It acts by binding to the integrin alpha2A domain and blocks collagen binding to integrin alpha-2/beta-1 (ITGA2/ITGB1). The gamma/delta subunits mainly contribute to this activity. The chain is Snaclec rhodocetin subunit gamma from Calloselasma rhodostoma (Malayan pit viper).